A 231-amino-acid chain; its full sequence is Ribonuclease 3 (231 aa).

In terms of domain architecture, RNase III spans 5 to 134 (QKGIKEDFGI…FIGALYKDQG (130 aa)). Residue glutamate 47 participates in Mg(2+) binding. The active site involves aspartate 51. Residues aspartate 120 and glutamate 123 each contribute to the Mg(2+) site. Glutamate 123 is a catalytic residue. In terms of domain architecture, DRBM spans 160–230 (DYKSKLQELL…AKKAYQDVTP (71 aa)).

The protein belongs to the ribonuclease III family. Homodimer. Mg(2+) serves as cofactor.

The protein localises to the cytoplasm. It carries out the reaction Endonucleolytic cleavage to 5'-phosphomonoester.. In terms of biological role, digests double-stranded RNA. Involved in the processing of primary rRNA transcript to yield the immediate precursors to the large and small rRNAs (23S and 16S). Processes some mRNAs, and tRNAs when they are encoded in the rRNA operon. Processes pre-crRNA and tracrRNA of type II CRISPR loci if present in the organism. The polypeptide is Ribonuclease 3 (Oenococcus oeni (strain ATCC BAA-331 / PSU-1)).